The following is a 92-amino-acid chain: Small ribosomal subunit protein uS19 (92 aa).

Belongs to the universal ribosomal protein uS19 family.

In terms of biological role, protein S19 forms a complex with S13 that binds strongly to the 16S ribosomal RNA. In Jannaschia sp. (strain CCS1), this protein is Small ribosomal subunit protein uS19.